The following is a 314-amino-acid chain: DNA-directed RNA polymerase subunit alpha (314 aa).

The segment at 1–228 is alpha N-terminal domain (alpha-NTD); that stretch reads MIEFEKPKIH…EHLAIFVNLN (228 aa). An alpha C-terminal domain (alpha-CTD) region spans residues 245–314; the sequence is KEKMLEMTIE…LLGLGFRSED (70 aa).

The protein belongs to the RNA polymerase alpha chain family. As to quaternary structure, homodimer. The RNAP catalytic core consists of 2 alpha, 1 beta, 1 beta' and 1 omega subunit. When a sigma factor is associated with the core the holoenzyme is formed, which can initiate transcription.

The enzyme catalyses RNA(n) + a ribonucleoside 5'-triphosphate = RNA(n+1) + diphosphate. Its function is as follows. DNA-dependent RNA polymerase catalyzes the transcription of DNA into RNA using the four ribonucleoside triphosphates as substrates. The chain is DNA-directed RNA polymerase subunit alpha from Pediococcus pentosaceus (strain ATCC 25745 / CCUG 21536 / LMG 10740 / 183-1w).